Here is a 431-residue protein sequence, read N- to C-terminus: Trigger factor (431 aa).

The 86-residue stretch at 160–245 (DDRVTIDFVG…VKKVEVMVLP (86 aa)) folds into the PPIase FKBP-type domain.

It belongs to the FKBP-type PPIase family. Tig subfamily.

It is found in the cytoplasm. The catalysed reaction is [protein]-peptidylproline (omega=180) = [protein]-peptidylproline (omega=0). Involved in protein export. Acts as a chaperone by maintaining the newly synthesized protein in an open conformation. Functions as a peptidyl-prolyl cis-trans isomerase. In Mannheimia succiniciproducens (strain KCTC 0769BP / MBEL55E), this protein is Trigger factor.